The following is a 329-amino-acid chain: Lipoyl synthase (329 aa).

[4Fe-4S] cluster contacts are provided by C55, C60, C66, C81, C85, C88, and S292. The Radical SAM core domain maps to 67-281 (WEDREATFLI…KAEAEAIGFL (215 aa)).

Belongs to the radical SAM superfamily. Lipoyl synthase family. Requires [4Fe-4S] cluster as cofactor.

The protein localises to the cytoplasm. The catalysed reaction is [[Fe-S] cluster scaffold protein carrying a second [4Fe-4S](2+) cluster] + N(6)-octanoyl-L-lysyl-[protein] + 2 oxidized [2Fe-2S]-[ferredoxin] + 2 S-adenosyl-L-methionine + 4 H(+) = [[Fe-S] cluster scaffold protein] + N(6)-[(R)-dihydrolipoyl]-L-lysyl-[protein] + 4 Fe(3+) + 2 hydrogen sulfide + 2 5'-deoxyadenosine + 2 L-methionine + 2 reduced [2Fe-2S]-[ferredoxin]. Its pathway is protein modification; protein lipoylation via endogenous pathway; protein N(6)-(lipoyl)lysine from octanoyl-[acyl-carrier-protein]: step 2/2. Its function is as follows. Catalyzes the radical-mediated insertion of two sulfur atoms into the C-6 and C-8 positions of the octanoyl moiety bound to the lipoyl domains of lipoate-dependent enzymes, thereby converting the octanoylated domains into lipoylated derivatives. This Clavibacter sepedonicus (Clavibacter michiganensis subsp. sepedonicus) protein is Lipoyl synthase.